We begin with the raw amino-acid sequence, 310 residues long: Isoflavone reductase homolog A622 (310 aa).

NADP(+)-binding positions include glycine 13–glycine 19, arginine 38, and lysine 47. Lysine 135 (proton acceptor) is an active-site residue. Arginine 139 contributes to the NADP(+) binding site.

The protein belongs to the NmrA-type oxidoreductase family. Isoflavone reductase subfamily. As to quaternary structure, monomer.

It is found in the cytoplasm. It participates in alkaloid biosynthesis; nicotine biosynthesis. Functionally, NADPH-binding protein. Involved in the biosynthesis of pyridine alkaloid natural products, leading mainly to the production of anabasine, anatabine, nicotine and nornicotine, effective deterrents against herbivores with antiparasitic and pesticide properties (neurotoxins); nornicotine serves as the precursor in the synthesis of the carcinogen compound N'-nitrosonornicotine (NNN). Reductase involved in a late step of tobacco alkaloid biosynthesis. Triggers either the formation of a nicotinic acid-derived precursor or the final condensation reaction of tobacco alkaloids. The protein is Isoflavone reductase homolog A622 of Nicotiana glauca (Glaucous tobacco).